A 245-amino-acid chain; its full sequence is Octanoyltransferase (245 aa).

A BPL/LPL catalytic domain is found at 54–238; it reads GEATELVWLL…AFENIFGETR (185 aa). Substrate-binding positions include 92-99, 167-169, and 180-182; these read RGGQLTYH, AIG, and GIA. The active-site Acyl-thioester intermediate is the C198.

The protein belongs to the LipB family.

Its subcellular location is the cytoplasm. The catalysed reaction is octanoyl-[ACP] + L-lysyl-[protein] = N(6)-octanoyl-L-lysyl-[protein] + holo-[ACP] + H(+). It functions in the pathway protein modification; protein lipoylation via endogenous pathway; protein N(6)-(lipoyl)lysine from octanoyl-[acyl-carrier-protein]: step 1/2. Its function is as follows. Catalyzes the transfer of endogenously produced octanoic acid from octanoyl-acyl-carrier-protein onto the lipoyl domains of lipoate-dependent enzymes. Lipoyl-ACP can also act as a substrate although octanoyl-ACP is likely to be the physiological substrate. The protein is Octanoyltransferase of Rhodopseudomonas palustris (strain TIE-1).